We begin with the raw amino-acid sequence, 134 residues long: NADH-quinone oxidoreductase subunit A (134 aa).

Helical transmembrane passes span 12 to 32 (FAIY…LAAL), 64 to 84 (FYLV…LFAW), and 93 to 113 (WVGF…LLYL).

It belongs to the complex I subunit 3 family. As to quaternary structure, NDH-1 is composed of 14 different subunits. Subunits NuoA, H, J, K, L, M, N constitute the membrane sector of the complex.

It is found in the cell inner membrane. It carries out the reaction a quinone + NADH + 5 H(+)(in) = a quinol + NAD(+) + 4 H(+)(out). NDH-1 shuttles electrons from NADH, via FMN and iron-sulfur (Fe-S) centers, to quinones in the respiratory chain. The immediate electron acceptor for the enzyme in this species is believed to be ubiquinone. Couples the redox reaction to proton translocation (for every two electrons transferred, four hydrogen ions are translocated across the cytoplasmic membrane), and thus conserves the redox energy in a proton gradient. The polypeptide is NADH-quinone oxidoreductase subunit A (Aeromonas salmonicida (strain A449)).